We begin with the raw amino-acid sequence, 72 residues long: Translation initiation factor IF-1 (72 aa).

One can recognise an S1-like domain in the interval 1 to 72; that stretch reads MAKEDCIEME…TKGRIKFRSK (72 aa).

This sequence belongs to the IF-1 family. As to quaternary structure, component of the 30S ribosomal translation pre-initiation complex which assembles on the 30S ribosome in the order IF-2 and IF-3, IF-1 and N-formylmethionyl-tRNA(fMet); mRNA recruitment can occur at any time during PIC assembly.

It localises to the cytoplasm. In terms of biological role, one of the essential components for the initiation of protein synthesis. Stabilizes the binding of IF-2 and IF-3 on the 30S subunit to which N-formylmethionyl-tRNA(fMet) subsequently binds. Helps modulate mRNA selection, yielding the 30S pre-initiation complex (PIC). Upon addition of the 50S ribosomal subunit IF-1, IF-2 and IF-3 are released leaving the mature 70S translation initiation complex. The polypeptide is Translation initiation factor IF-1 (Francisella tularensis subsp. tularensis (strain FSC 198)).